The sequence spans 371 residues: Dead end protein homolog 1 (371 aa).

RRM domains lie at 85 to 163 (PQDI…ALDG) and 165 to 245 (PGNF…KLRS).

The protein localises to the nucleus. It is found in the cytoplasm. RNA-binding factor that positively regulates gene expression by prohibiting miRNA-mediated gene suppression. Relieves miRNA repression in germline cells. Prohibits the function of several miRNAs by blocking the accessibility of target mRNAs. Sequence-specific RNA-binding factor that binds to U-rich regions (URRs) in the 3'untranslated region (3'-UTR) of several mRNAs. Does not bind to miRNAs. May play a role during early embryonic survival. In Xenopus laevis (African clawed frog), this protein is Dead end protein homolog 1 (dnd1).